We begin with the raw amino-acid sequence, 144 residues long: Large ribosomal subunit protein uL15 (144 aa).

A disordered region spans residues 1-57; that stretch reads MFLNTLRPGEGSKHAPKRVGRGIGSGLGKTGGRGHKGLKSRSGGSVKPGFEGGQMPL. Over residues 21-31 the composition is skewed to gly residues; sequence RGIGSGLGKTG.

Belongs to the universal ribosomal protein uL15 family. In terms of assembly, part of the 50S ribosomal subunit.

Functionally, binds to the 23S rRNA. The sequence is that of Large ribosomal subunit protein uL15 from Marinomonas sp. (strain MWYL1).